The sequence spans 427 residues: Enolase 2 (427 aa).

Position 165 (glutamine 165) interacts with (2R)-2-phosphoglycerate. The Proton donor role is filled by glutamate 207. Mg(2+)-binding residues include aspartate 244, glutamate 287, and aspartate 314. 4 residues coordinate (2R)-2-phosphoglycerate: lysine 339, arginine 368, serine 369, and lysine 390. Lysine 339 functions as the Proton acceptor in the catalytic mechanism.

The protein belongs to the enolase family. Component of the RNA degradosome, a multiprotein complex involved in RNA processing and mRNA degradation. Requires Mg(2+) as cofactor.

It localises to the cytoplasm. The protein resides in the secreted. The protein localises to the cell surface. The catalysed reaction is (2R)-2-phosphoglycerate = phosphoenolpyruvate + H2O. Its pathway is carbohydrate degradation; glycolysis; pyruvate from D-glyceraldehyde 3-phosphate: step 4/5. In terms of biological role, catalyzes the reversible conversion of 2-phosphoglycerate (2-PG) into phosphoenolpyruvate (PEP). It is essential for the degradation of carbohydrates via glycolysis. This is Enolase 2 from Pseudomonas syringae pv. tomato (strain ATCC BAA-871 / DC3000).